A 446-amino-acid polypeptide reads, in one-letter code: GRAM domain-containing protein 2B (446 aa).

Residue Met-1 is modified to N-acetylmethionine. The interval 1–120 (MVKKRLPSND…RKKSSSSSQY (120 aa)) is disordered. Low complexity predominate over residues 29 to 43 (SRSSTDSPSSVFFSS). A compositionally biased stretch (basic and acidic residues) spans 95-113 (DKNDCKTESKNDPKTERKK). Positions 124-191 (MHFHKLFLSV…FSVTLIKKTK (68 aa)) constitute a GRAM domain. The segment covering 234–247 (TSVGNSPNPSSAEN) has biased composition (polar residues). The segment at 234-253 (TSVGNSPNPSSAENSFRADR) is disordered. Ser-239, Ser-256, and Ser-266 each carry phosphoserine. Residues 276–298 (RQDMEGYSSSGSQTPESENSRDF) form a disordered region. Positions 282–292 (YSSSGSQTPES) are enriched in polar residues.

This chain is GRAM domain-containing protein 2B (GRAMD2B), found in Pongo abelii (Sumatran orangutan).